A 160-amino-acid chain; its full sequence is Large ribosomal subunit protein eL21A (160 aa).

Positions 114–138 (AKRKEAKAQGKTVQLRRQPAPPAKA) are disordered.

This sequence belongs to the eukaryotic ribosomal protein eL21 family. As to quaternary structure, component of the large ribosomal subunit (LSU). Mature yeast ribosomes consist of a small (40S) and a large (60S) subunit. The 40S small subunit contains 1 molecule of ribosomal RNA (18S rRNA) and at least 33 different proteins. The large 60S subunit contains 3 rRNA molecules (25S, 5.8S and 5S rRNA) and at least 46 different proteins.

It is found in the cytoplasm. Functionally, component of the ribosome, a large ribonucleoprotein complex responsible for the synthesis of proteins in the cell. The small ribosomal subunit (SSU) binds messenger RNAs (mRNAs) and translates the encoded message by selecting cognate aminoacyl-transfer RNA (tRNA) molecules. The large subunit (LSU) contains the ribosomal catalytic site termed the peptidyl transferase center (PTC), which catalyzes the formation of peptide bonds, thereby polymerizing the amino acids delivered by tRNAs into a polypeptide chain. The nascent polypeptides leave the ribosome through a tunnel in the LSU and interact with protein factors that function in enzymatic processing, targeting, and the membrane insertion of nascent chains at the exit of the ribosomal tunnel. The protein is Large ribosomal subunit protein eL21A (rpl2101) of Schizosaccharomyces pombe (strain 972 / ATCC 24843) (Fission yeast).